Consider the following 424-residue polypeptide: Serine--tRNA ligase (424 aa).

230-232 (TAE) serves as a coordination point for L-serine. ATP is bound at residue 261–263 (RSE). Glu-284 serves as a coordination point for L-serine. ATP is bound at residue 348 to 351 (EISS). Ser-384 is a binding site for L-serine.

The protein belongs to the class-II aminoacyl-tRNA synthetase family. Type-1 seryl-tRNA synthetase subfamily. As to quaternary structure, homodimer. The tRNA molecule binds across the dimer.

It localises to the cytoplasm. It catalyses the reaction tRNA(Ser) + L-serine + ATP = L-seryl-tRNA(Ser) + AMP + diphosphate + H(+). The enzyme catalyses tRNA(Sec) + L-serine + ATP = L-seryl-tRNA(Sec) + AMP + diphosphate + H(+). It functions in the pathway aminoacyl-tRNA biosynthesis; selenocysteinyl-tRNA(Sec) biosynthesis; L-seryl-tRNA(Sec) from L-serine and tRNA(Sec): step 1/1. Catalyzes the attachment of serine to tRNA(Ser). Is also able to aminoacylate tRNA(Sec) with serine, to form the misacylated tRNA L-seryl-tRNA(Sec), which will be further converted into selenocysteinyl-tRNA(Sec). In Streptococcus pneumoniae (strain ATCC 700669 / Spain 23F-1), this protein is Serine--tRNA ligase.